A 411-amino-acid chain; its full sequence is Multifunctional CCA protein (411 aa).

ATP is bound by residues Gly8 and Arg11. The CTP site is built by Gly8 and Arg11. 2 residues coordinate Mg(2+): Asp21 and Asp23. Positions 91, 137, and 140 each coordinate ATP. Residues Arg91, Arg137, and Arg140 each coordinate CTP. Positions 228 to 333 (SGVHTLLVIE…LKVFNALDIW (106 aa)) constitute an HD domain.

This sequence belongs to the tRNA nucleotidyltransferase/poly(A) polymerase family. Bacterial CCA-adding enzyme type 1 subfamily. In terms of assembly, monomer. Can also form homodimers and oligomers. It depends on Mg(2+) as a cofactor. Ni(2+) serves as cofactor.

The enzyme catalyses a tRNA precursor + 2 CTP + ATP = a tRNA with a 3' CCA end + 3 diphosphate. The catalysed reaction is a tRNA with a 3' CCA end + 2 CTP + ATP = a tRNA with a 3' CCACCA end + 3 diphosphate. In terms of biological role, catalyzes the addition and repair of the essential 3'-terminal CCA sequence in tRNAs without using a nucleic acid template. Adds these three nucleotides in the order of C, C, and A to the tRNA nucleotide-73, using CTP and ATP as substrates and producing inorganic pyrophosphate. tRNA 3'-terminal CCA addition is required both for tRNA processing and repair. Also involved in tRNA surveillance by mediating tandem CCA addition to generate a CCACCA at the 3' terminus of unstable tRNAs. While stable tRNAs receive only 3'-terminal CCA, unstable tRNAs are marked with CCACCA and rapidly degraded. This is Multifunctional CCA protein from Actinobacillus pleuropneumoniae serotype 5b (strain L20).